The primary structure comprises 429 residues: MEKLNIAGGDSLNGTVHISGAKNSAVALIPATILANSEVTIEGLPEISDIETLRDLLKEIGGNVHFENGEMVVDPTSMISMPLPNGKVKKLRASYYLMGAMLGRFKQAVIGLPGGCHLGPRPIDQHIKGFEALGAEVTNEQGAIYLRAERLRGARIYLDVVSVGATINIMLAAVLAEGKTIIENAAKEPEIIDVATLLTSMGAKIKGAGTNVIRIDGVKELHGCKHTIIPDRIEAGTFMIAGAAMGKEVIIDNVIPTHLESLTAKLREMGYHIETSDDQLLIVGGQKNLKPVDVKTLVYPGFPTDLQQPMTALLTRAKGTSVVTDTIYSARFKHIDELRRMGANMKVEGRSAIITGPVELQGAKVKASDLRAGACLVVAGLMADGVTEITGLEHIDRGYSSLEKKLEGLGATIWRERMTDEEIEQLQNS.

22–23 contacts phosphoenolpyruvate; the sequence is KN. Residue R92 participates in UDP-N-acetyl-alpha-D-glucosamine binding. Residue C116 is the Proton donor of the active site. The residue at position 116 (C116) is a 2-(S-cysteinyl)pyruvic acid O-phosphothioketal. Residues 121–125, D305, and I327 each bind UDP-N-acetyl-alpha-D-glucosamine; that span reads RPIDQ.

The protein belongs to the EPSP synthase family. MurA subfamily.

The protein resides in the cytoplasm. The enzyme catalyses phosphoenolpyruvate + UDP-N-acetyl-alpha-D-glucosamine = UDP-N-acetyl-3-O-(1-carboxyvinyl)-alpha-D-glucosamine + phosphate. Its pathway is cell wall biogenesis; peptidoglycan biosynthesis. Cell wall formation. Adds enolpyruvyl to UDP-N-acetylglucosamine. The polypeptide is UDP-N-acetylglucosamine 1-carboxyvinyltransferase 2 (Bacillus subtilis (strain 168)).